The primary structure comprises 168 residues: Nucleoside deoxyribosyltransferase (168 aa).

Glutamate 103 functions as the Nucleophile in the catalytic mechanism.

It belongs to the nucleoside deoxyribosyltransferase family.

It catalyses the reaction 2-deoxy-D-ribosyl-base(1) + base(2) = 2-deoxy-D-ribosyl-base(2) + base(1).. It functions in the pathway nucleotide metabolism; nucleotide salvage pathway. In terms of biological role, catalyzes the cleavage of the glycosidic bond of 2'-deoxyribonucleosides and the transfer of the deoxyribosyl moiety to an acceptor purine or pyrimidine base. The polypeptide is Nucleoside deoxyribosyltransferase (ntd) (Limosilactobacillus fermentum (Lactobacillus fermentum)).